The sequence spans 317 residues: Lipoyl synthase (317 aa).

Residues Cys-55, Cys-60, Cys-66, Cys-81, Cys-85, Cys-88, and Ser-292 each contribute to the [4Fe-4S] cluster site. Residues Trp-67–Ala-281 enclose the Radical SAM core domain.

It belongs to the radical SAM superfamily. Lipoyl synthase family. Requires [4Fe-4S] cluster as cofactor.

The protein localises to the cytoplasm. The catalysed reaction is [[Fe-S] cluster scaffold protein carrying a second [4Fe-4S](2+) cluster] + N(6)-octanoyl-L-lysyl-[protein] + 2 oxidized [2Fe-2S]-[ferredoxin] + 2 S-adenosyl-L-methionine + 4 H(+) = [[Fe-S] cluster scaffold protein] + N(6)-[(R)-dihydrolipoyl]-L-lysyl-[protein] + 4 Fe(3+) + 2 hydrogen sulfide + 2 5'-deoxyadenosine + 2 L-methionine + 2 reduced [2Fe-2S]-[ferredoxin]. The protein operates within protein modification; protein lipoylation via endogenous pathway; protein N(6)-(lipoyl)lysine from octanoyl-[acyl-carrier-protein]: step 2/2. In terms of biological role, catalyzes the radical-mediated insertion of two sulfur atoms into the C-6 and C-8 positions of the octanoyl moiety bound to the lipoyl domains of lipoate-dependent enzymes, thereby converting the octanoylated domains into lipoylated derivatives. The protein is Lipoyl synthase of Mycolicibacterium gilvum (strain PYR-GCK) (Mycobacterium gilvum (strain PYR-GCK)).